The primary structure comprises 101 residues: ATP-dependent Clp protease adapter protein ClpS (101 aa).

Belongs to the ClpS family. Binds to the N-terminal domain of the chaperone ClpA.

Functionally, involved in the modulation of the specificity of the ClpAP-mediated ATP-dependent protein degradation. In Clostridium acetobutylicum (strain ATCC 824 / DSM 792 / JCM 1419 / IAM 19013 / LMG 5710 / NBRC 13948 / NRRL B-527 / VKM B-1787 / 2291 / W), this protein is ATP-dependent Clp protease adapter protein ClpS.